The sequence spans 286 residues: 4-diphosphocytidyl-2-C-methyl-D-erythritol kinase (286 aa).

The active site involves Lys11. Pro93 to Ser103 is a binding site for ATP. Asp135 is an active-site residue.

It belongs to the GHMP kinase family. IspE subfamily.

It catalyses the reaction 4-CDP-2-C-methyl-D-erythritol + ATP = 4-CDP-2-C-methyl-D-erythritol 2-phosphate + ADP + H(+). It participates in isoprenoid biosynthesis; isopentenyl diphosphate biosynthesis via DXP pathway; isopentenyl diphosphate from 1-deoxy-D-xylulose 5-phosphate: step 3/6. Its function is as follows. Catalyzes the phosphorylation of the position 2 hydroxy group of 4-diphosphocytidyl-2C-methyl-D-erythritol. In Chlorobium phaeobacteroides (strain BS1), this protein is 4-diphosphocytidyl-2-C-methyl-D-erythritol kinase.